We begin with the raw amino-acid sequence, 871 residues long: Envelope glycoprotein gp160 (871 aa).

An N-terminal signal peptide occupies residues 1–21 (MKNLIGITLILIITILGIGFS). Topologically, residues 22-684 (TYYTTVFYGV…DITQWLWYIK (663 aa)) are extracellular. Residues cysteine 43 and cysteine 63 are joined by a disulfide bond. N-linked (GlcNAc...) asparagine; by host glycosylation is found at asparagine 77, asparagine 124, asparagine 127, asparagine 142, asparagine 153, asparagine 157, asparagine 185, asparagine 194, asparagine 229, asparagine 238, asparagine 259, asparagine 273, asparagine 285, asparagine 289, asparagine 297, asparagine 329, asparagine 345, asparagine 352, asparagine 384, asparagine 387, asparagine 395, asparagine 398, asparagine 438, asparagine 451, and asparagine 496. 5 cysteine pairs are disulfide-bonded: cysteine 108–cysteine 202, cysteine 115–cysteine 193, cysteine 120–cysteine 154, cysteine 215–cysteine 244, and cysteine 225–cysteine 236. Residues 120-153 (CTMTNTTNKTLNSATTTLTPTVNLSSIPNYEVYN) are V1. The V2 stretch occupies residues 154-193 (CSFNQTTEFRDKKKQIYSLFYREDIVKEDGNNNSYYLHNC). The tract at residues 292 to 325 (CERTGNNTRGQVQIGPGMTFYNIENVVGDTRKAY) is V3. Cysteine 292 and cysteine 326 are joined by a disulfide. Intrachain disulfides connect cysteine 376-cysteine 435 and cysteine 383-cysteine 408. Residues 383–408 (CNLTNWTNTWTANRTNNTHGTLVAPC) form a V4 region. The tract at residues 451-458 (NNSYTPQF) is V5. The fusion peptide stretch occupies residues 502 to 522 (RDVGIGLLFLGFLSAAGSTMG). An immunosuppression region spans residues 567–583 (LQARMLAVEKYIRDQQL). Residues asparagine 602, asparagine 613, asparagine 626, and asparagine 638 are each glycosylated (N-linked (GlcNAc...) asparagine; by host). A coiled-coil region spans residues 645–668 (SLLEKAQTQQEKNKQELLELDKWS). The interval 663-684 (ELDKWSSLWDWFDITQWLWYIK) is MPER; binding to GalCer. The chain crosses the membrane as a helical span at residues 685-705 (IAIIIVAGLVGLRILMFIVNV). Residues 706 to 871 (VKQVRQGYTP…IRQGLELALN (166 aa)) are Cytoplasmic-facing. Residues 713–716 (YTPL) carry the YXXL motif; contains endocytosis signal motif.

As to quaternary structure, the mature envelope protein (Env) consists of a homotrimer of non-covalently associated gp120-gp41 heterodimers. The resulting complex protrudes from the virus surface as a spike. Interacts with host CD4 and CCR5. Gp120 also interacts with the C-type lectins CD209/DC-SIGN and CLEC4M/DC-SIGNR (collectively referred to as DC-SIGN(R)). In terms of assembly, the mature envelope protein (Env) consists of a homotrimer of non-covalently associated gp120-gp41 heterodimers. The resulting complex protrudes from the virus surface as a spike. In terms of processing, specific enzymatic cleavages in vivo yield mature proteins. Envelope glycoproteins are synthesized as an inactive precursor that is heavily N-glycosylated and processed likely by host cell furin in the Golgi to yield the mature SU and TM proteins. The cleavage site between SU and TM requires the minimal sequence [KR]-X-[KR]-R.

It localises to the virion membrane. Its subcellular location is the host cell membrane. The protein localises to the host endosome membrane. The surface protein gp120 (SU) attaches the virus to the host lymphoid cell by binding to the primary receptor CD4. This interaction induces a structural rearrangement creating a high affinity binding site for a chemokine coreceptor like CCR5. This peculiar 2 stage receptor-interaction strategy allows gp120 to maintain the highly conserved coreceptor-binding site in a cryptic conformation, protected from neutralizing antibodies. These changes are transmitted to the transmembrane protein gp41 and are thought to activate its fusogenic potential by unmasking its fusion peptide. In terms of biological role, surface protein gp120 (SU) may target the virus to gut-associated lymphoid tissue (GALT) by binding host ITGA4/ITGB7 (alpha-4/beta-7 integrins), a complex that mediates T-cell migration to the GALT. Interaction between gp120 and ITGA4/ITGB7 would allow the virus to enter GALT early in the infection, infecting and killing most of GALT's resting CD4+ T-cells. This T-cell depletion is believed to be the major insult to the host immune system leading to AIDS. Its function is as follows. The surface protein gp120 is a ligand for CD209/DC-SIGN and CLEC4M/DC-SIGNR, which are respectively found on dendritic cells (DCs), and on endothelial cells of liver sinusoids and lymph node sinuses. These interactions allow capture of viral particles at mucosal surfaces by these cells and subsequent transmission to permissive cells. DCs are professional antigen presenting cells, critical for host immunity by inducing specific immune responses against a broad variety of pathogens. They act as sentinels in various tissues where they take up antigen, process it, and present it to T-cells following migration to lymphoid organs. SIV subverts the migration properties of dendritic cells to gain access to CD4+ T-cells in lymph nodes. Virus transmission to permissive T-cells occurs either in trans (without DCs infection, through viral capture and transmission), or in cis (following DCs productive infection, through the usual CD4-gp120 interaction), thereby inducing a robust infection. In trans infection, bound virions remain infectious over days and it is proposed that they are not degraded, but protected in non-lysosomal acidic organelles within the DCs close to the cell membrane thus contributing to the viral infectious potential during DCs' migration from the periphery to the lymphoid tissues. On arrival at lymphoid tissues, intact virions recycle back to DCs' cell surface allowing virus transmission to CD4+ T-cells. Virion capture also seems to lead to MHC-II-restricted viral antigen presentation, and probably to the activation of SIV-specific CD4+ cells. Functionally, the transmembrane protein gp41 (TM) acts as a class I viral fusion protein. Under the current model, the protein has at least 3 conformational states: pre-fusion native state, pre-hairpin intermediate state, and post-fusion hairpin state. During fusion of viral and target intracellular membranes, the coiled coil regions (heptad repeats) assume a trimer-of-hairpins structure, positioning the fusion peptide in close proximity to the C-terminal region of the ectodomain. The formation of this structure appears to drive apposition and subsequent fusion of viral and target cell membranes. Complete fusion occurs in host cell endosomes. The virus undergoes clathrin-dependent internalization long before endosomal fusion, thus minimizing the surface exposure of conserved viral epitopes during fusion and reducing the efficacy of inhibitors targeting these epitopes. Membranes fusion leads to delivery of the nucleocapsid into the cytoplasm. The envelope glycoprotein gp160 precursor down-modulates cell surface CD4 antigen by interacting with it in the endoplasmic reticulum and blocking its transport to the cell surface. In terms of biological role, the gp120-gp41 heterodimer allows rapid transcytosis of the virus through CD4 negative cells such as simple epithelial monolayers of the intestinal, rectal and endocervical epithelial barriers. Both gp120 and gp41 specifically recognize glycosphingolipids galactosyl-ceramide (GalCer) or 3' sulfo-galactosyl-ceramide (GalS) present in the lipid rafts structures of epithelial cells. Binding to these alternative receptors allows the rapid transcytosis of the virus through the epithelial cells. This transcytotic vesicle-mediated transport of virions from the apical side to the basolateral side of the epithelial cells does not involve infection of the cells themselves. The polypeptide is Envelope glycoprotein gp160 (Simian immunodeficiency virus (isolate TAN1) (SIV-cpz)).